The chain runs to 640 residues: MGKIIGIDLGTTNSCVAIMDGGKARVIENSEGDRTTPSIVAYTKDGEVLVGASAKRQAVTNPKNTFYAVKRLIGRKFTDAEVQKDIAHVPYSILAHDNGDAWVATSDGKKMAPQEISAKVLEKMKKTAEDFLGEKVTEAVITVPAYFNDSQRQATKDAGRIAGLDVKRIINEPTAAALAYGLDKGDNKDRKIVVYDLGGGTFDVSVIEIANVDGEKQFEVLATNGDTFLGGEDFDNRVIEYLVEEFNKDQGIDLRKDPLALQRLKDAAERAKIELSSAQQTEVNLPYVTADASGPKHLNIKLTRAKLEALVDDLIKKSIEPCRVALNDAGLRSSDISEVILVGGQTRMPKVQQAVTEFFGKEPRKDVNPDEAVALGAAIQGGVLGGDVKDVLLLDVTPLSLGIETMGGVFTKIIEKNTTIPTKASQVFSTAEDNQSAVTVHVLQGEREQARFNKSLAKFDLSGIEPAPRGLPQVEVSFDIDANGILHVSAKDKKTNKEQKVEIKAGSGLSEEEIARMVADAEANREEDKKFQELVQARNQADALIHGTRSAITEHGSKVGGDVIGKVEAALADLETAMKGDDKAQIEAKSKALEEAGQSLFAAASADQGGAPGADAGNAGKAQDDVVDAEFTEVKDDKKS.

Phosphothreonine; by autocatalysis is present on T201. Positions 603–621 (AASADQGGAPGADAGNAGK) are enriched in low complexity. A disordered region spans residues 603–625 (AASADQGGAPGADAGNAGKAQDD).

Belongs to the heat shock protein 70 family.

In terms of biological role, acts as a chaperone. In Stenotrophomonas maltophilia (strain K279a), this protein is Chaperone protein DnaK.